We begin with the raw amino-acid sequence, 195 residues long: Recombination protein RecR (195 aa).

The segment at 56–71 (CRQCHSFSDDDICPIC) adopts a C4-type zinc-finger fold. Residues 79–174 (SVLCVVETAA…KVTRIAQGIP (96 aa)) form the Toprim domain.

This sequence belongs to the RecR family.

Functionally, may play a role in DNA repair. It seems to be involved in an RecBC-independent recombinational process of DNA repair. It may act with RecF and RecO. This Psychrobacter sp. (strain PRwf-1) protein is Recombination protein RecR.